Here is a 330-residue protein sequence, read N- to C-terminus: DNA-directed RNA polymerase subunit alpha (330 aa).

The segment at 1–236 is alpha N-terminal domain (alpha-NTD); the sequence is MQNSVIEFLK…EQLEAFIDLR (236 aa). Positions 250 to 330 are alpha C-terminal domain (alpha-CTD); it reads FDPILLRLVD…NWPPTNILDN (81 aa).

Belongs to the RNA polymerase alpha chain family. In terms of assembly, homodimer. The RNAP catalytic core consists of 2 alpha, 1 beta, 1 beta' and 1 omega subunit. When a sigma factor is associated with the core the holoenzyme is formed, which can initiate transcription.

It carries out the reaction RNA(n) + a ribonucleoside 5'-triphosphate = RNA(n+1) + diphosphate. Its function is as follows. DNA-dependent RNA polymerase catalyzes the transcription of DNA into RNA using the four ribonucleoside triphosphates as substrates. The protein is DNA-directed RNA polymerase subunit alpha of Blochmanniella pennsylvanica (strain BPEN).